Consider the following 188-residue polypeptide: Elongation factor P-like protein (188 aa).

Belongs to the elongation factor P family.

The protein is Elongation factor P-like protein of Aliivibrio fischeri (strain MJ11) (Vibrio fischeri).